We begin with the raw amino-acid sequence, 343 residues long: MSLSQPSTQSRVKVKSFLTGLQDDICKGLENIDGEGTFQEESWERPEGGGGRSRVMREGRIFEQGGVNFSEVHGEELPPSILNQRPEAKGHKWFATGTSMVLHPRNPYIPTVHLNYRYFEAGPVWWFGGGADLTPYYPYLKDTRHFHKIHQEACDSINPKLHKVFKPWCDEYFFLKHRNESRGVGGIFFDYQDGSGKLYKGQNPNGLSSIASKELGEYKLSWEDLFSLAKACGNAFLPSYIPIIEKRHNQTFSDRERNFQLYRRGRYVEFNLVWDRGTIFGLQTNGRTESILMSLPPLARWEYGFKAPPESRESLLTDVFTKPQEWFTDESLEEKCRPHHAVD.

Substrate is bound at residue serine 99. A divalent metal cation contacts are provided by histidine 103 and histidine 113. Histidine 113 functions as the Proton donor in the catalytic mechanism. 115 to 117 (NYR) provides a ligand contact to substrate. The a divalent metal cation site is built by histidine 147 and histidine 177. An important for dimerization region spans residues 267 to 302 (YVEFNLVWDRGTIFGLQTNGRTESILMSLPPLARWE).

It belongs to the aerobic coproporphyrinogen-III oxidase family. In terms of assembly, homodimer. The cofactor is a divalent metal cation.

It localises to the cytoplasm. The catalysed reaction is coproporphyrinogen III + O2 + 2 H(+) = protoporphyrinogen IX + 2 CO2 + 2 H2O. It functions in the pathway porphyrin-containing compound metabolism; protoporphyrin-IX biosynthesis; protoporphyrinogen-IX from coproporphyrinogen-III (O2 route): step 1/1. Its function is as follows. Involved in the heme and chlorophyll biosynthesis. Catalyzes the aerobic oxidative decarboxylation of propionate groups of rings A and B of coproporphyrinogen-III to yield the vinyl groups in protoporphyrinogen-IX. The protein is Oxygen-dependent coproporphyrinogen-III oxidase of Prochlorococcus marinus (strain SARG / CCMP1375 / SS120).